A 1312-amino-acid chain; its full sequence is Probable histone-lysine N-methyltransferase lin-59 (1312 aa).

2 stretches are compositionally biased toward polar residues: residues 1-11 (MHGAGEQQQRY) and 25-36 (STSSHQYQQQGA). 5 disordered regions span residues 1–41 (MHGA…QMHQ), 54–81 (TTTSAAASTSSSGGSNSSGGSGGHRQQG), 154–223 (QPSG…KPVD), 312–435 (EESK…PPPV), and 524–556 (KDNIKKEVKEESTPPPTKLRGRLPSRRTREPSE). Over residues 54–68 (TTTSAAASTSSSGGS) the composition is skewed to low complexity. The segment covering 69 to 78 (NSSGGSGGHR) has biased composition (gly residues). A compositionally biased stretch (low complexity) spans 160–176 (PMSSNAPATTSSATPDS). The segment covering 200 to 210 (DHDDEEDDDGP) has biased composition (acidic residues). Basic and acidic residues predominate over residues 312–321 (EESKKKKDME). Residues 344–367 (ATRSTNSPDVTTSNLPEEPSTSTM) are compositionally biased toward polar residues. Over residues 371 to 382 (KENEDVEKVEGK) the composition is skewed to basic and acidic residues. Over residues 383 to 394 (RRGRKPKKRRGF) the composition is skewed to basic residues. 2 stretches are compositionally biased toward basic and acidic residues: residues 395–419 (HKESFEDLESDAKKSKAEQHEDHLP) and 524–535 (KDNIKKEVKEES). The 46-residue stretch at 590–635 (APSLTCGCTKGACTSDMDCLNRALRVQCSSDCSVPYCSNRRFWKED) folds into the AWS domain. The region spanning 638 to 750 (NKLCVSNGPR…PNAEITVDKS (113 aa)) is the SET domain. The tract at residues 913 to 934 (DNAPRARALSTSCPSPVPSKRG) is disordered. The segment at 967 to 1027 (AVRCICGALD…EYICDFCTNK (61 aa)) adopts a PHD-type zinc-finger fold. In terms of domain architecture, BAH spans 1100 to 1223 (NKYRFPKAAT…KTQRVFEKVP (124 aa)). Residues 1248–1295 (RDFRPYDPSNPSPKPPKTSSIPSTSSIDPPQSSSDGLPEVDTKKLSKR) are disordered. Over residues 1264–1281 (KTSSIPSTSSIDPPQSSS) the composition is skewed to low complexity.

Belongs to the class V-like SAM-binding methyltransferase superfamily. Histone-lysine methyltransferase family. SET2 subfamily. In terms of tissue distribution, widely expressed throughout embryonic development and into adulthood.

The protein localises to the nucleus. It catalyses the reaction L-lysyl-[histone] + S-adenosyl-L-methionine = N(6)-methyl-L-lysyl-[histone] + S-adenosyl-L-homocysteine + H(+). Probable histone methyltransferase. Essential protein required to maintain expression of homeotic genes egl-5 and mab-5. May play an analogous role to the trithorax Group (trxG) proteins. TrxG proteins form multiprotein complexes that are required to maintain the transcriptionally active state of homeotic genes throughout development. May act via a modification of chromatin. The protein is Probable histone-lysine N-methyltransferase lin-59 (lin-59) of Caenorhabditis elegans.